Reading from the N-terminus, the 452-residue chain is Retinoid-inducible serine carboxypeptidase (452 aa).

A signal peptide spans 1–26 (MELALRRSPVPRWLLLLPLLLGLNAG). N-linked (GlcNAc...) asparagine glycans are attached at residues N64 and N126. The active site involves S167. The N-linked (GlcNAc...) asparagine glycan is linked to N362. Active-site residues include D371 and H431.

Belongs to the peptidase S10 family.

Its subcellular location is the secreted. Functionally, may be involved in vascular wall and kidney homeostasis. The polypeptide is Retinoid-inducible serine carboxypeptidase (SCPEP1) (Homo sapiens (Human)).